Reading from the N-terminus, the 208-residue chain is Holliday junction resolvase RecU (208 aa).

The Mg(2+) site is built by Thr86, Asp88, Glu101, and Gln120.

The protein belongs to the RecU family. Mg(2+) serves as cofactor.

Its subcellular location is the cytoplasm. The enzyme catalyses Endonucleolytic cleavage at a junction such as a reciprocal single-stranded crossover between two homologous DNA duplexes (Holliday junction).. Functionally, endonuclease that resolves Holliday junction intermediates in genetic recombination. Cleaves mobile four-strand junctions by introducing symmetrical nicks in paired strands. Promotes annealing of linear ssDNA with homologous dsDNA. Required for DNA repair, homologous recombination and chromosome segregation. This chain is Holliday junction resolvase RecU, found in Lacticaseibacillus casei (strain BL23) (Lactobacillus casei).